The following is a 609-amino-acid chain: Protein tesmin/TSO1-like CXC 3 (609 aa).

The span at 69 to 84 (ESRFRSQKDVSASKEV) shows a compositional bias: basic and acidic residues. Disordered stretches follow at residues 69-102 (ESRF…YKND), 307-328 (PISP…SSCK), 457-477 (LFEQ…KTQQ), and 569-609 (NSKR…TPHH). Residues 326-451 (SCKRCNCKKS…RCEGCKNAFG (126 aa)) form the CRC domain. The segment covering 466–477 (TSGTPGTKKTQQ) has biased composition (polar residues).

The protein belongs to the lin-54 family. Ubiquitous but expressed mostly in flowers and at significant levels in leaves. Detected with highest levels in developing ovules and microspores, and in petals.

It localises to the nucleus. Plays a role in development of both male and female reproductive tissues. The polypeptide is Protein tesmin/TSO1-like CXC 3 (TCX3) (Arabidopsis thaliana (Mouse-ear cress)).